A 275-amino-acid chain; its full sequence is Membrane protein insertase YidC (275 aa).

An N-terminal signal peptide occupies residues 1 to 22 (MKKYKRLLLMAGLVTLVFVLSA). Residue Cys-23 is the site of N-palmitoyl cysteine attachment. Cys-23 carries the S-diacylglycerol cysteine lipid modification. 4 consecutive transmembrane segments (helical) span residues 53 to 73 (LGGSVGIGIILFTLVIRIILL), 127 to 147 (YIGCLPLLVQLPIMMALYQAI), 169 to 189 (YLILPILAAVFTFASTYLSSM), and 206 to 226 (PAMIFFMGISLASSLSLYWVV). Residues 249–266 (EEAARQAKARERALERAK) show a composition bias toward basic and acidic residues. The interval 249 to 275 (EEAARQAKARERALERAKSPKKKGKKK) is disordered.

The protein belongs to the OXA1/ALB3/YidC family. Type 2 subfamily.

Its subcellular location is the cell membrane. Functionally, required for the insertion and/or proper folding and/or complex formation of integral membrane proteins into the membrane. Involved in integration of membrane proteins that insert both dependently and independently of the Sec translocase complex, as well as at least some lipoproteins. The polypeptide is Membrane protein insertase YidC (Enterococcus faecalis (strain ATCC 700802 / V583)).